The chain runs to 131 residues: Small ribosomal subunit protein uS19 (131 aa).

It belongs to the universal ribosomal protein uS19 family.

Its function is as follows. Protein S19 forms a complex with S13 that binds strongly to the 16S ribosomal RNA. The chain is Small ribosomal subunit protein uS19 from Cenarchaeum symbiosum (strain A).